Consider the following 201-residue polypeptide: Single-stranded DNA-binding protein, mitochondrial (201 aa).

Positions 71 to 184 constitute an SSB domain; sequence VHRAIICGKV…RDGKIRMIKY (114 aa).

Its subcellular location is the mitochondrion. Functionally, binds to ss-DNA. This is Single-stranded DNA-binding protein, mitochondrial from Arabidopsis thaliana (Mouse-ear cress).